We begin with the raw amino-acid sequence, 1561 residues long: Rho GTPase-activating protein 190 (1561 aa).

FF domains are found at residues 252-320, 365-419, 426-480, and 482-547; these read YQES…HMKK, YLQN…YLNS, KIGW…HQDD, and IEKS…HLRF. The pG1 pseudoGTPase domain occupies 592–765; it reads SGSDRTLNLL…EPYPSNHTDL (174 aa). Positions 766–926 constitute a pG2 pseudoGTPase domain; that stretch reads RILCCIFCGD…LKTAWDNKYE (161 aa). Serine 973, serine 975, serine 985, serine 988, and serine 996 each carry phosphoserine. The tract at residues 1054–1074 is disordered; that stretch reads KIRPKGPSQTLKVGEAPSRNC. The 204-residue stretch at 1349–1552 folds into the Rho-GAP domain; the sequence is AQFGKLMITS…TMIDQFPYLF (204 aa).

Negatively regulated by integrin, bsk and Src/Src64B. GTPase-activating protein (GAP) for RhoA/Rho1 that plays an essential role in the stability of dorsal branches of mushroom body (MB) neurons. The MB neurons are the center for olfactory learning and memory. Acts by converting RhoA/Rho1 to an inactive GDP-bound state, leading to repress the RhoA/Rho1-Drok-MRLC signaling pathway thereby maintaining axon branch stability. The polypeptide is Rho GTPase-activating protein 190 (RhoGAPp190) (Drosophila melanogaster (Fruit fly)).